The following is a 322-amino-acid chain: tRNA-dihydrouridine synthase B (322 aa).

FMN-binding positions include 16-18 and Gln-70; that span reads PMA. Cys-100 (proton donor) is an active-site residue. Residues Lys-139, 200-202, and 224-225 each bind FMN; these read NGD and GR.

Belongs to the Dus family. DusB subfamily. FMN is required as a cofactor.

The catalysed reaction is a 5,6-dihydrouridine in tRNA + NAD(+) = a uridine in tRNA + NADH + H(+). It catalyses the reaction a 5,6-dihydrouridine in tRNA + NADP(+) = a uridine in tRNA + NADPH + H(+). Catalyzes the synthesis of 5,6-dihydrouridine (D), a modified base found in the D-loop of most tRNAs, via the reduction of the C5-C6 double bond in target uridines. The protein is tRNA-dihydrouridine synthase B of Shewanella oneidensis (strain ATCC 700550 / JCM 31522 / CIP 106686 / LMG 19005 / NCIMB 14063 / MR-1).